A 322-amino-acid chain; its full sequence is Phosphatidylserine decarboxylase proenzyme (322 aa).

Active-site charge relay system; for autoendoproteolytic cleavage activity residues include Asp90, His147, and Ser254. The Schiff-base intermediate with substrate; via pyruvic acid; for decarboxylase activity role is filled by Ser254. Ser254 carries the pyruvic acid (Ser); by autocatalysis modification. Positions 292-322 (TPDAEPSPLPAEEIEAEHDASPLVDDKKDQV) are disordered. The span at 308-322 (EHDASPLVDDKKDQV) shows a compositional bias: basic and acidic residues.

Belongs to the phosphatidylserine decarboxylase family. PSD-B subfamily. Prokaryotic type I sub-subfamily. In terms of assembly, heterodimer of a large membrane-associated beta subunit and a small pyruvoyl-containing alpha subunit. It depends on pyruvate as a cofactor. Post-translationally, is synthesized initially as an inactive proenzyme. Formation of the active enzyme involves a self-maturation process in which the active site pyruvoyl group is generated from an internal serine residue via an autocatalytic post-translational modification. Two non-identical subunits are generated from the proenzyme in this reaction, and the pyruvate is formed at the N-terminus of the alpha chain, which is derived from the carboxyl end of the proenzyme. The autoendoproteolytic cleavage occurs by a canonical serine protease mechanism, in which the side chain hydroxyl group of the serine supplies its oxygen atom to form the C-terminus of the beta chain, while the remainder of the serine residue undergoes an oxidative deamination to produce ammonia and the pyruvoyl prosthetic group on the alpha chain. During this reaction, the Ser that is part of the protease active site of the proenzyme becomes the pyruvoyl prosthetic group, which constitutes an essential element of the active site of the mature decarboxylase.

The protein localises to the cell membrane. The catalysed reaction is a 1,2-diacyl-sn-glycero-3-phospho-L-serine + H(+) = a 1,2-diacyl-sn-glycero-3-phosphoethanolamine + CO2. The protein operates within phospholipid metabolism; phosphatidylethanolamine biosynthesis; phosphatidylethanolamine from CDP-diacylglycerol: step 2/2. In terms of biological role, catalyzes the formation of phosphatidylethanolamine (PtdEtn) from phosphatidylserine (PtdSer). The chain is Phosphatidylserine decarboxylase proenzyme from Escherichia coli O7:K1 (strain IAI39 / ExPEC).